Here is a 457-residue protein sequence, read N- to C-terminus: Bifunctional protein GlmU (457 aa).

The interval 1–229 is pyrophosphorylase; it reads MYNCAIILAA…YEEIMGVNSR (229 aa). UDP-N-acetyl-alpha-D-glucosamine is bound by residues 8–11, K22, Q73, and 78–79; these read LAAG and GT. D103 serves as a coordination point for Mg(2+). 4 residues coordinate UDP-N-acetyl-alpha-D-glucosamine: G140, E155, N170, and N227. Mg(2+) is bound at residue N227. Residues 230-250 are linker; sequence VQLSEAEIVMRKRINHKHMVN. The segment at 251-457 is N-acetyltransferase; it reads GVTFIDCEST…WLDKKGLLKK (207 aa). UDP-N-acetyl-alpha-D-glucosamine contacts are provided by R332 and K350. The Proton acceptor role is filled by H362. UDP-N-acetyl-alpha-D-glucosamine contacts are provided by Y365 and N376. Acetyl-CoA is bound by residues 385–386, A422, and R439; that span reads NY.

The protein in the N-terminal section; belongs to the N-acetylglucosamine-1-phosphate uridyltransferase family. It in the C-terminal section; belongs to the transferase hexapeptide repeat family. Homotrimer. Mg(2+) is required as a cofactor.

It localises to the cytoplasm. The enzyme catalyses alpha-D-glucosamine 1-phosphate + acetyl-CoA = N-acetyl-alpha-D-glucosamine 1-phosphate + CoA + H(+). It carries out the reaction N-acetyl-alpha-D-glucosamine 1-phosphate + UTP + H(+) = UDP-N-acetyl-alpha-D-glucosamine + diphosphate. It functions in the pathway nucleotide-sugar biosynthesis; UDP-N-acetyl-alpha-D-glucosamine biosynthesis; N-acetyl-alpha-D-glucosamine 1-phosphate from alpha-D-glucosamine 6-phosphate (route II): step 2/2. It participates in nucleotide-sugar biosynthesis; UDP-N-acetyl-alpha-D-glucosamine biosynthesis; UDP-N-acetyl-alpha-D-glucosamine from N-acetyl-alpha-D-glucosamine 1-phosphate: step 1/1. The protein operates within bacterial outer membrane biogenesis; LPS lipid A biosynthesis. Its function is as follows. Catalyzes the last two sequential reactions in the de novo biosynthetic pathway for UDP-N-acetylglucosamine (UDP-GlcNAc). The C-terminal domain catalyzes the transfer of acetyl group from acetyl coenzyme A to glucosamine-1-phosphate (GlcN-1-P) to produce N-acetylglucosamine-1-phosphate (GlcNAc-1-P), which is converted into UDP-GlcNAc by the transfer of uridine 5-monophosphate (from uridine 5-triphosphate), a reaction catalyzed by the N-terminal domain. This chain is Bifunctional protein GlmU, found in Clostridium botulinum (strain Langeland / NCTC 10281 / Type F).